The following is a 193-amino-acid chain: ATP-dependent Clp protease proteolytic subunit 2 (193 aa).

Residue S98 is the Nucleophile of the active site. H123 is a catalytic residue.

It belongs to the peptidase S14 family. In terms of assembly, fourteen ClpP subunits assemble into 2 heptameric rings which stack back to back to give a disk-like structure with a central cavity, resembling the structure of eukaryotic proteasomes.

It localises to the cytoplasm. The enzyme catalyses Hydrolysis of proteins to small peptides in the presence of ATP and magnesium. alpha-casein is the usual test substrate. In the absence of ATP, only oligopeptides shorter than five residues are hydrolyzed (such as succinyl-Leu-Tyr-|-NHMec, and Leu-Tyr-Leu-|-Tyr-Trp, in which cleavage of the -Tyr-|-Leu- and -Tyr-|-Trp bonds also occurs).. Its function is as follows. Cleaves peptides in various proteins in a process that requires ATP hydrolysis. Has a chymotrypsin-like activity. Plays a major role in the degradation of misfolded proteins. The polypeptide is ATP-dependent Clp protease proteolytic subunit 2 (Bacillus cereus (strain ATCC 10987 / NRS 248)).